Here is a 300-residue protein sequence, read N- to C-terminus: NAD kinase (300 aa).

The active-site Proton acceptor is the aspartate 75. NAD(+) is bound by residues 75–76, 149–150, arginine 177, aspartate 179, 190–195, alanine 214, and glutamine 248; these read DG, ND, and TAYALS.

The protein belongs to the NAD kinase family. A divalent metal cation serves as cofactor.

It is found in the cytoplasm. It catalyses the reaction NAD(+) + ATP = ADP + NADP(+) + H(+). Functionally, involved in the regulation of the intracellular balance of NAD and NADP, and is a key enzyme in the biosynthesis of NADP. Catalyzes specifically the phosphorylation on 2'-hydroxyl of the adenosine moiety of NAD to yield NADP. The chain is NAD kinase from Burkholderia lata (strain ATCC 17760 / DSM 23089 / LMG 22485 / NCIMB 9086 / R18194 / 383).